The primary structure comprises 939 residues: Dynamin-like GTPase MGM1, mitochondrial (939 aa).

A mitochondrion-targeting transit peptide spans 1–27; it reads MSAQLRAAAAITPAARRVISGPAAVRR. The chain crosses the membrane as a helical span at residues 85 to 103; that stretch reads FIRVPALFGGMMLGAVGWV. Positions 170–183 are enriched in gly residues; that stretch reads AGEGSGSGEGGPNG. Residues 170–196 form a disordered region; it reads AGEGSGSGEGGPNGGPEPPRQSRAGAA. One can recognise a Dynamin-type G domain in the interval 249–522; sequence TVTLPSIVVI…LEQQMSSKLN (274 aa). Residues 259–266 are G1 motif; sequence GSQSSGKS. 6 residues coordinate GTP: serine 262, glycine 264, lysine 265, serine 266, serine 267, and glycine 281. Serine 266 is a binding site for Mg(2+). The tract at residues 285-287 is G2 motif; the sequence is ITR. 2 residues coordinate Mg(2+): threonine 286 and aspartate 359. The segment at 359–362 is G3 motif; it reads DLPG. The interval 427 to 430 is G4 motif; sequence TKMD. Positions 428, 430, and 457 each coordinate GTP. The interval 456-459 is G5 motif; the sequence is ISKL. A stalk region region spans residues 549–703; sequence SAESYLAASL…TSDGIEISLK (155 aa). The segment at 710 to 809 is paddle region; the sequence is DIQPNEWAQG…LSLRIQAAKS (100 aa). Residues 810–877 are stalk region; that stretch reads RQCKTLTNKY…GGGLEKFARE (68 aa). Residues cysteine 812 and cysteine 821 are joined by a disulfide bond. One can recognise a GED domain in the interval 815 to 909; it reads LTNKYYCPEV…KIEELHRISS (95 aa).

Belongs to the TRAFAC class dynamin-like GTPase superfamily. Dynamin/Fzo/YdjA family. As to quaternary structure, oligomeric complex consisting of membrane-bound and soluble forms of MGM1. Cleavage of the transit peptide by mitochondrial processing protease (MPP) produces a long integral membrane form of MGM1 (L-MGM1). Further processing by the rhomboid protease PCP1 produces a short peripheral membrane form of MGM1 (S-MGM1). Both forms are required for full activity.

Its subcellular location is the mitochondrion inner membrane. It is found in the mitochondrion intermembrane space. It catalyses the reaction GTP + H2O = GDP + phosphate + H(+). Dynamin-related GTPase that is essential for normal mitochondrial morphology by mediating fusion of the mitochondrial inner membranes, regulating cristae morphology and maintaining respiratory chain function. Exists in two forms: the transmembrane, long form (Dynamin-like GTPase MGM1, long form; L-MGM1), which is tethered to the inner mitochondrial membrane, and the short soluble form (Dynamin-like GTPase MGM1, short form; S-MGM1), which results from proteolytic cleavage and localizes in the intermembrane space. Both forms (L-MGM1 and S-MGM1) cooperate to catalyze the fusion of the mitochondrial inner membrane. The equilibrium between L-MGM1 and S-MGM1 is essential: excess levels of S-MGM1, following loss of mitochondrial membrane potential, lead to an impaired equilibrium between L-MGM1 and S-MGM1, inhibiting mitochondrial fusion. Plays a role in the maintenance and remodeling of mitochondrial cristae, some invaginations of the mitochondrial inner membrane that provide an increase in the surface area. Probably acts by forming helical filaments at the inside of inner membrane tubes with the shape and dimensions of crista junctions. In terms of biological role, constitutes the transmembrane long form (L-MGM1) that plays a central role in mitochondrial inner membrane fusion and cristae morphology. L-MGM1 and the soluble short form (S-MGM1) form higher-order helical assemblies that coordinate the fusion of mitochondrial inner membranes. Inner membrane-anchored L-MGM1 molecules initiate membrane remodeling by recruiting soluble S-MGM1 to rapidly polymerize into a flexible cylindrical scaffold encaging the mitochondrial inner membrane. Once at the membrane surface, the formation of S-MGM1 helices induce bilayer curvature. MGM1 dimerization through the paddle region, which inserts into cardiolipin-containing membrane, promotes GTP hydrolysis and the helical assembly of a flexible MGM1 lattice on the membrane, which drives membrane curvature and mitochondrial fusion. Functionally, constitutes the soluble short form (S-MGM1) generated by cleavage by PCP1, which plays a central role in mitochondrial inner membrane fusion and cristae morphology. The transmembrane long form (L-MGM1) and the S-MGM1 form higher-order helical assemblies that coordinate the fusion of mitochondrial inner membranes. Inner membrane-anchored L-MGM1 molecules initiate membrane remodeling by recruiting soluble S-MGM1 to rapidly polymerize into a flexible cylindrical scaffold encaging the mitochondrial inner membrane. Once at the membrane surface, the formation of S-MGM1 helices induce bilayer curvature. MGM1 dimerization through the paddle region, which inserts into cardiolipin-containing membrane, promotes GTP hydrolysis and the helical assembly of a flexible MGM1 lattice on the membrane, which drives membrane curvature and mitochondrial fusion. Excess levels of S-MGM1 produced by cleavage by PCP1 following stress conditions that induce loss of mitochondrial membrane potential, lead to an impaired equilibrium between L-MGM1 and S-MGM1, thereby inhibiting mitochondrial fusion. The chain is Dynamin-like GTPase MGM1, mitochondrial from Chaetomium thermophilum (strain DSM 1495 / CBS 144.50 / IMI 039719) (Thermochaetoides thermophila).